The sequence spans 346 residues: D-alanine--D-alanine ligase (346 aa).

The ATP-grasp domain maps to 133–326 (KFLAQKAGVK…LANSLPKERE (194 aa)). Position 159–209 (159–209 (YPIILKPARLGSSIGVSVVHDDSELAYAKDVAFEFDKDVLVEPFIKGVKEY)) interacts with ATP. Asp282, Glu294, and Asn296 together coordinate Mg(2+).

It belongs to the D-alanine--D-alanine ligase family. Mg(2+) serves as cofactor. It depends on Mn(2+) as a cofactor.

The protein resides in the cytoplasm. The enzyme catalyses 2 D-alanine + ATP = D-alanyl-D-alanine + ADP + phosphate + H(+). It functions in the pathway cell wall biogenesis; peptidoglycan biosynthesis. Functionally, cell wall formation. This is D-alanine--D-alanine ligase from Campylobacter concisus (strain 13826).